The chain runs to 65 residues: Large ribosomal subunit protein bL35 (65 aa).

Belongs to the bacterial ribosomal protein bL35 family.

This Yersinia pseudotuberculosis serotype O:1b (strain IP 31758) protein is Large ribosomal subunit protein bL35.